A 50-amino-acid polypeptide reads, in one-letter code: Temporin-SHb (50 aa).

The signal sequence occupies residues Phe1–Cys10. A propeptide spanning residues Glu11–Arg35 is cleaved from the precursor. The disordered stretch occupies residues Gln12–Glu31. Residues Arg14–Val30 show a composition bias toward acidic residues. A Leucine amide modification is found at Leu48.

This sequence belongs to the frog skin active peptide (FSAP) family. Temporin subfamily. As to expression, expressed by the skin glands.

The protein resides in the secreted. Functionally, amphipathic alpha-helical peptide with no antimicrobial activity. Does not display anti-leishmania activity. Does not show hemolytic activity (LC(50)&gt;116 uM). The chain is Temporin-SHb from Pelophylax saharicus (Sahara frog).